The primary structure comprises 127 residues: Large ribosomal subunit protein bL20 (127 aa).

The protein belongs to the bacterial ribosomal protein bL20 family.

Functionally, binds directly to 23S ribosomal RNA and is necessary for the in vitro assembly process of the 50S ribosomal subunit. It is not involved in the protein synthesizing functions of that subunit. This chain is Large ribosomal subunit protein bL20 (rplT), found in Streptomyces coelicolor (strain ATCC BAA-471 / A3(2) / M145).